The following is an 85-amino-acid chain: Putative membrane protein insertion efficiency factor (85 aa).

This sequence belongs to the UPF0161 family.

It localises to the cell membrane. Its function is as follows. Could be involved in insertion of integral membrane proteins into the membrane. The polypeptide is Putative membrane protein insertion efficiency factor (Baumannia cicadellinicola subsp. Homalodisca coagulata).